The primary structure comprises 467 residues: Uronate isomerase (467 aa).

The protein belongs to the metallo-dependent hydrolases superfamily. Uronate isomerase family.

It catalyses the reaction D-glucuronate = D-fructuronate. It carries out the reaction aldehydo-D-galacturonate = keto-D-tagaturonate. The protein operates within carbohydrate metabolism; pentose and glucuronate interconversion. The chain is Uronate isomerase from Haemophilus influenzae (strain PittGG).